Reading from the N-terminus, the 1074-residue chain is Probable phospholipid-transporting ATPase tat-5 (1074 aa).

A disordered region spans residues 1-26 (MGKRKKNDESSSSSSQKPCVSSSSDD). The span at 10–26 (SSSSSSQKPCVSSSSDD) shows a compositional bias: low complexity. The next 4 membrane-spanning stretches (helical) occupy residues 118–138 (FVPIVLFQQFKFFLNLYFLLM), 143–163 (FIPAIQIGAPITYWGPLGFVL), 354–374 (LTKLLFCFVLVLSSVMVAMKG), and 378–398 (LWYRYLMRFILLFSYIIPISL). The active-site 4-aspartylphosphate intermediate is D442. ATP-binding residues include D442, K443, T444, E524, F570, K575, K594, R623, T624, T704, G705, D706, R786, and K792. D442 serves as a coordination point for Mg(2+). T444 contributes to the Mg(2+) binding site. Residue D813 participates in Mg(2+) binding. 2 residues coordinate ATP: N816 and D817. Residue D817 participates in Mg(2+) binding. 5 helical membrane-spanning segments follow: residues 886 to 906 (AIFSCVFYFASVSLYQGVLMV), 954 to 974 (IWVLISLYQGAVIMYGALLVF), 978 to 998 (FIHVVSISFSALIVTELIMVA), 1006 to 1026 (WAMLLAQALSLGLYMISLILF), and 1038 to 1058 (WVFISKTTAITAVSCLPLYIV).

This sequence belongs to the cation transport ATPase (P-type) (TC 3.A.3) family. Type IV subfamily. Requires Mg(2+) as cofactor.

It is found in the cell membrane. It carries out the reaction ATP + H2O + phospholipidSide 1 = ADP + phosphate + phospholipidSide 2.. In terms of biological role, plays a role in regulating membrane trafficking of cargo proteins during embryogenesis. Regulates snx-3 retromer-mediated endosomal sorting of mig-14, a transporter of Wnt egl-20 morphogen. Together with mon-2 and pad-1, may participate in the formation of endosomal carriers that direct mig-14 trafficking back to Golgi, away from lysosomal degradation. Required for Wnt egl-20 gradient formation along the anteroposterior body axis and migration of QL neuroblast descendants toward the posterior part. Maintains phosphatidylethanolamine (PE) asymmetry at the cell membrane and prevents the budding of ectosome vesicles that affect intercellular communication and morphogenesis. The sequence is that of Probable phospholipid-transporting ATPase tat-5 (tat-5) from Caenorhabditis elegans.